Consider the following 115-residue polypeptide: NADH-ubiquinone oxidoreductase chain 3 (115 aa).

A run of 3 helical transmembrane segments spans residues 3-23 (IMIT…IAFW), 55-75 (FFLV…LLPL), and 87-107 (MLTT…YEWL).

This sequence belongs to the complex I subunit 3 family. As to quaternary structure, core subunit of respiratory chain NADH dehydrogenase (Complex I) which is composed of 45 different subunits. Interacts with TMEM186. Interacts with TMEM242.

The protein localises to the mitochondrion inner membrane. It carries out the reaction a ubiquinone + NADH + 5 H(+)(in) = a ubiquinol + NAD(+) + 4 H(+)(out). Core subunit of the mitochondrial membrane respiratory chain NADH dehydrogenase (Complex I) which catalyzes electron transfer from NADH through the respiratory chain, using ubiquinone as an electron acceptor. Essential for the catalytic activity of complex I. This is NADH-ubiquinone oxidoreductase chain 3 from Dasypus novemcinctus (Nine-banded armadillo).